The primary structure comprises 55 residues: ATP synthase F(0) complex subunit 8 (55 aa).

A helical transmembrane segment spans residues 4–24 (LNPHPWFSIFITSWLILIIIL).

This sequence belongs to the ATPase protein 8 family. In terms of assembly, component of the ATP synthase complex composed at least of ATP5F1A/subunit alpha, ATP5F1B/subunit beta, ATP5MC1/subunit c (homooctomer), MT-ATP6/subunit a, MT-ATP8/subunit 8, ATP5ME/subunit e, ATP5MF/subunit f, ATP5MG/subunit g, ATP5MK/subunit k, ATP5MJ/subunit j, ATP5F1C/subunit gamma, ATP5F1D/subunit delta, ATP5F1E/subunit epsilon, ATP5PF/subunit F6, ATP5PB/subunit b, ATP5PD/subunit d, ATP5PO/subunit OSCP. ATP synthase complex consists of a soluble F(1) head domain (subunits alpha(3) and beta(3)) - the catalytic core - and a membrane F(0) domain - the membrane proton channel (subunits c, a, 8, e, f, g, k and j). These two domains are linked by a central stalk (subunits gamma, delta, and epsilon) rotating inside the F1 region and a stationary peripheral stalk (subunits F6, b, d, and OSCP).

The protein resides in the mitochondrion membrane. In terms of biological role, subunit 8, of the mitochondrial membrane ATP synthase complex (F(1)F(0) ATP synthase or Complex V) that produces ATP from ADP in the presence of a proton gradient across the membrane which is generated by electron transport complexes of the respiratory chain. ATP synthase complex consist of a soluble F(1) head domain - the catalytic core - and a membrane F(1) domain - the membrane proton channel. These two domains are linked by a central stalk rotating inside the F(1) region and a stationary peripheral stalk. During catalysis, ATP synthesis in the catalytic domain of F(1) is coupled via a rotary mechanism of the central stalk subunits to proton translocation. In vivo, can only synthesize ATP although its ATP hydrolase activity can be activated artificially in vitro. Part of the complex F(0) domain. The protein is ATP synthase F(0) complex subunit 8 of Pelomedusa subrufa (African side-necked turtle).